Consider the following 502-residue polypeptide: CBL-interacting serine/threonine-protein kinase 13 (502 aa).

A disordered region spans residues 32 to 51 (TNKETSTPESPRSPRTPQGS). Over residues 35–48 (ETSTPESPRSPRTP) the composition is skewed to low complexity. In terms of domain architecture, Protein kinase spans 57–311 (YEIGKLLGHG…IPEIMKHRWF (255 aa)). Residues 63 to 71 (LGHGSFAKV) and lysine 86 each bind ATP. Aspartate 179 acts as the Proton acceptor in catalysis. The activation loop stretch occupies residues 197–226 (DFGLSVVSEQLKQEGICQTFCGTPAYLAPE). Serine 201 bears the Phosphoserine mark. Threonine 215 carries the phosphothreonine modification. Residues 331 to 359 (DDDNDDDDSSSLSSGRSSTASEGDAEFDI) are disordered. Low complexity predominate over residues 340–352 (SSLSSGRSSTASE). The 22-residue stretch at 366 to 387 (PRPASLNAFDILSFSDLSGLFE) folds into the NAF domain. A PPI region spans residues 390–419 (GQGARFVSAAPMTKIISKLEEIAKEVKFMV).

Belongs to the protein kinase superfamily. CAMK Ser/Thr protein kinase family. SNF1 subfamily. As to quaternary structure, interacts with CBL2 and CBL3. Requires Mn(2+) as cofactor.

The enzyme catalyses L-seryl-[protein] + ATP = O-phospho-L-seryl-[protein] + ADP + H(+). The catalysed reaction is L-threonyl-[protein] + ATP = O-phospho-L-threonyl-[protein] + ADP + H(+). Functionally, CIPK serine-threonine protein kinases interact with CBL proteins. Binding of a CBL protein to the regulatory NAF domain of CIPK protein lead to the activation of the kinase in a calcium-dependent manner. This Arabidopsis thaliana (Mouse-ear cress) protein is CBL-interacting serine/threonine-protein kinase 13 (CIPK13).